We begin with the raw amino-acid sequence, 201 residues long: MRIGIISVGPGNIMNLYRGVKRASENFEDVSIELVESPRNDLYDLLFIPGVGHFGEGMRRLRENDLIDFVRKHVEDERYVVGVCLGMQLLFEESEEAPGVKGLSLIEGNVVKLRSRRLPHMGWNEVIFKDTFPNGYYYFVHTYRAVCEEEHVLGTTEYDGEIFPSAVRKGRILGFQFHPEKSSKIGRKLLEKVIECSLSRR.

The Glutamine amidotransferase type-1 domain maps to 2–201; that stretch reads RIGIISVGPG…KVIECSLSRR (200 aa). Cys-84 functions as the Nucleophile in the catalytic mechanism. Residues His-178 and Glu-180 contribute to the active site.

In terms of assembly, heterodimer of HisH and HisF.

Its subcellular location is the cytoplasm. It catalyses the reaction 5-[(5-phospho-1-deoxy-D-ribulos-1-ylimino)methylamino]-1-(5-phospho-beta-D-ribosyl)imidazole-4-carboxamide + L-glutamine = D-erythro-1-(imidazol-4-yl)glycerol 3-phosphate + 5-amino-1-(5-phospho-beta-D-ribosyl)imidazole-4-carboxamide + L-glutamate + H(+). The catalysed reaction is L-glutamine + H2O = L-glutamate + NH4(+). Its pathway is amino-acid biosynthesis; L-histidine biosynthesis; L-histidine from 5-phospho-alpha-D-ribose 1-diphosphate: step 5/9. Activated by the binding of either IGP or PRFAR to the active site of HisF. IGPS catalyzes the conversion of PRFAR and glutamine to IGP, AICAR and glutamate. The HisH subunit catalyzes the hydrolysis of glutamine to glutamate and ammonia as part of the synthesis of IGP and AICAR. The resulting ammonia molecule is channeled to the active site of HisF. The protein is Imidazole glycerol phosphate synthase subunit HisH (hisH) of Thermotoga maritima (strain ATCC 43589 / DSM 3109 / JCM 10099 / NBRC 100826 / MSB8).